The chain runs to 251 residues: Large ribosomal subunit protein uL3 (251 aa).

An N5-methylglutamine modification is found at Q151. The tract at residues 221-251 (GLKQAANSNDSAAADTPAEVAAVEATEGQEG) is disordered. Low complexity predominate over residues 225–251 (AANSNDSAAADTPAEVAAVEATEGQEG).

It belongs to the universal ribosomal protein uL3 family. Part of the 50S ribosomal subunit. Forms a cluster with proteins L14 and L19. Post-translationally, methylated by PrmB.

One of the primary rRNA binding proteins, it binds directly near the 3'-end of the 23S rRNA, where it nucleates assembly of the 50S subunit. The chain is Large ribosomal subunit protein uL3 from Novosphingobium aromaticivorans (strain ATCC 700278 / DSM 12444 / CCUG 56034 / CIP 105152 / NBRC 16084 / F199).